The sequence spans 81 residues: Photosystem I iron-sulfur center (81 aa).

2 4Fe-4S ferredoxin-type domains span residues 2–31 (AHIV…MVPW) and 39–68 (MASA…VRVY). [4Fe-4S] cluster contacts are provided by Cys-11, Cys-14, Cys-17, Cys-21, Cys-48, Cys-51, Cys-54, and Cys-58.

As to quaternary structure, the eukaryotic PSI reaction center is composed of at least 11 subunits. Requires [4Fe-4S] cluster as cofactor.

The protein localises to the plastid. Its subcellular location is the chloroplast thylakoid membrane. The enzyme catalyses reduced [plastocyanin] + hnu + oxidized [2Fe-2S]-[ferredoxin] = oxidized [plastocyanin] + reduced [2Fe-2S]-[ferredoxin]. In terms of biological role, apoprotein for the two 4Fe-4S centers FA and FB of photosystem I (PSI); essential for photochemical activity. FB is the terminal electron acceptor of PSI, donating electrons to ferredoxin. The C-terminus interacts with PsaA/B/D and helps assemble the protein into the PSI complex. Required for binding of PsaD and PsaE to PSI. PSI is a plastocyanin/cytochrome c6-ferredoxin oxidoreductase, converting photonic excitation into a charge separation, which transfers an electron from the donor P700 chlorophyll pair to the spectroscopically characterized acceptors A0, A1, FX, FA and FB in turn. This chain is Photosystem I iron-sulfur center, found in Chlamydomonas reinhardtii (Chlamydomonas smithii).